Consider the following 1183-residue polypeptide: Translation initiation factor IF-2 (1183 aa).

Disordered stretches follow at residues 55–512 (KSKT…KVHI) and 538–574 (ASLA…RQRR). Positions 83 to 99 (TQKDQKTEPKKKNHDQT) are enriched in basic and acidic residues. Composition is skewed to polar residues over residues 100-143 (ELSQ…QITA) and 165-177 (KPLT…IPQS). Residues 220 to 229 (PKIDIQDKKP) show a composition bias toward basic and acidic residues. The segment covering 231–252 (QPNNQKAKTRINQGEISPQKVG) has biased composition (polar residues). Residues 253 to 267 (QGNIQKIKSQNKQNQ) are compositionally biased toward low complexity. Residues 288 to 304 (IRREKPVNKPHTNEVRN) are compositionally biased toward basic and acidic residues. Polar residues-rich tracts occupy residues 324–349 (QGLS…NRQG) and 357–367 (NRTTQGQNRPG). Residues 485 to 499 (GRPDWDDSAKLDALR) are compositionally biased toward basic and acidic residues. 2 stretches are compositionally biased toward basic residues: residues 544-553 (SKPKVGKRNN) and 560-574 (LKKR…RQRR). Residues 675–847 (RRPPVVTVMG…VLLVTEVEDL (173 aa)) enclose the tr-type G domain. The G1 stretch occupies residues 684 to 691 (GHVDHGKT). Position 684 to 691 (684 to 691 (GHVDHGKT)) interacts with GTP. Residues 709–713 (GITQH) are G2. The tract at residues 734-737 (DTPG) is G3. Residues 734–738 (DTPGH) and 788–791 (NKID) contribute to the GTP site. Residues 788–791 (NKID) form a G4 region. The G5 stretch occupies residues 824–826 (SAI).

It belongs to the TRAFAC class translation factor GTPase superfamily. Classic translation factor GTPase family. IF-2 subfamily.

The protein localises to the cytoplasm. Functionally, one of the essential components for the initiation of protein synthesis. Protects formylmethionyl-tRNA from spontaneous hydrolysis and promotes its binding to the 30S ribosomal subunits. Also involved in the hydrolysis of GTP during the formation of the 70S ribosomal complex. The sequence is that of Translation initiation factor IF-2 from Prochlorococcus marinus (strain NATL1A).